The following is a 373-amino-acid chain: Zinc finger CCCH domain-containing protein 15 homolog (373 aa).

Positions 1-27 (MPPKQAQSKKTVEKEKKKKVEDKTFGL) are disordered. Basic and acidic residues predominate over residues 10 to 25 (KTVEKEKKKKVEDKTF). C3H1-type zinc fingers lie at residues 95–123 (DPKSIVCEYFKQGVTCPKGNRCKFAHDLA) and 167–205 (KPTAIICKFFLDAIESKKYGWFWECPNGGEKCAYQHCLP). The stretch at 252-326 (KEEKRLQKEK…ALANQINTSL (75 aa)) forms a coiled coil. A disordered region spans residues 325-373 (SLFTDGGVLPSDDDDDDDDDDDDDEDGDDEEEDDDEEEGEYEEEEASDE). Residues 335 to 373 (SDDDDDDDDDDDDDEDGDDEEEDDDEEEGEYEEEEASDE) are compositionally biased toward acidic residues.

Belongs to the ZC3H15/TMA46 family.

The sequence is that of Zinc finger CCCH domain-containing protein 15 homolog from Dictyostelium discoideum (Social amoeba).